The primary structure comprises 242 residues: Transcription factor bHLH100 (242 aa).

The 53-residue stretch at 61 to 113 (MKKLNHNASERERRKKINTMFSSLRSCLPPTNQTKKLSVSATVSQALKYIPEL) folds into the bHLH domain.

As to quaternary structure, homodimer. In terms of tissue distribution, expressed constitutively in roots, leaves, and stems.

Its subcellular location is the nucleus. Plays a role in metal homeostasis. Confers tolerance to high zinc (Zn) and nickel (Ni). In Arabidopsis thaliana (Mouse-ear cress), this protein is Transcription factor bHLH100 (BHLH100).